The primary structure comprises 459 residues: Cysteine--tRNA ligase (459 aa).

Cysteine 28 contacts Zn(2+). The 'HIGH' region signature appears at valine 30 to histidine 40. Cysteine 209, histidine 234, and glutamate 238 together coordinate Zn(2+). The short motif at lysine 266–serine 270 is the 'KMSKS' region element. Lysine 269 lines the ATP pocket.

The protein belongs to the class-I aminoacyl-tRNA synthetase family. As to quaternary structure, monomer. Requires Zn(2+) as cofactor.

It is found in the cytoplasm. It carries out the reaction tRNA(Cys) + L-cysteine + ATP = L-cysteinyl-tRNA(Cys) + AMP + diphosphate. The polypeptide is Cysteine--tRNA ligase (Shewanella baltica (strain OS185)).